Consider the following 127-residue polypeptide: Putative pre-16S rRNA nuclease (127 aa).

The protein belongs to the YqgF nuclease family.

Its subcellular location is the cytoplasm. Functionally, could be a nuclease involved in processing of the 5'-end of pre-16S rRNA. The polypeptide is Putative pre-16S rRNA nuclease (Campylobacter jejuni subsp. jejuni serotype O:23/36 (strain 81-176)).